We begin with the raw amino-acid sequence, 175 residues long: Bifunctional protein PyrR (175 aa).

The PRPP-binding signature appears at 97–109 (IVLIDDVLFTGRT).

The protein belongs to the purine/pyrimidine phosphoribosyltransferase family. PyrR subfamily. In terms of assembly, homodimer and homohexamer; in equilibrium.

The enzyme catalyses UMP + diphosphate = 5-phospho-alpha-D-ribose 1-diphosphate + uracil. Functionally, regulates transcriptional attenuation of the pyrimidine nucleotide (pyr) operon by binding in a uridine-dependent manner to specific sites on pyr mRNA. This disrupts an antiterminator hairpin in the RNA and favors formation of a downstream transcription terminator, leading to a reduced expression of downstream genes. Its function is as follows. Also displays a weak uracil phosphoribosyltransferase activity which is not physiologically significant. The protein is Bifunctional protein PyrR of Leuconostoc citreum (strain KM20).